The chain runs to 186 residues: MDATVTVVGNLTADPELRYTATGAAVVNMTIASTPRMYDRQSGEWKDGEPLFLRGILWREYAINAAASLAKGMRVVAVGKLKQRNYETREGDRRTSVELEIDEIGPTLRYATAKCSRATQAGHGVSPDPWADSQTGQGIDSHTTRSEEITENAKNGEGAGKNELNKKVLVGDNVSYEDFDSDEVPF.

The 108-residue stretch at 1–108 (MDATVTVVGN…LEIDEIGPTL (108 aa)) folds into the SSB domain. Positions 120–186 (QAGHGVSPDP…EDFDSDEVPF (67 aa)) are disordered. Positions 132 to 141 (DSQTGQGIDS) are enriched in polar residues. Residues 175-186 (SYEDFDSDEVPF) show a composition bias toward acidic residues.

Homotetramer.

The sequence is that of Single-stranded DNA-binding protein 1 (ssb1) from Tropheryma whipplei (strain TW08/27) (Whipple's bacillus).